Reading from the N-terminus, the 637-residue chain is DNA mismatch repair protein MutL (637 aa).

This sequence belongs to the DNA mismatch repair MutL/HexB family.

In terms of biological role, this protein is involved in the repair of mismatches in DNA. It is required for dam-dependent methyl-directed DNA mismatch repair. May act as a 'molecular matchmaker', a protein that promotes the formation of a stable complex between two or more DNA-binding proteins in an ATP-dependent manner without itself being part of a final effector complex. In Actinobacillus succinogenes (strain ATCC 55618 / DSM 22257 / CCUG 43843 / 130Z), this protein is DNA mismatch repair protein MutL.